The sequence spans 661 residues: 3-hydroxypropionyl-coenzyme A synthetase (661 aa).

D526 is an active-site residue. Position 617 is an N6-acetyllysine (K617).

This sequence belongs to the ATP-dependent AMP-binding enzyme family. In terms of assembly, homotetramer.

It carries out the reaction 3-hydroxypropanoate + ATP + CoA = 3-hydroxypropanoyl-CoA + AMP + diphosphate. Functionally, plays a role in the autotrophic CO(2) fixation pathway. Activates 3-hydroxypropionate to its CoA ester. Can also activate propionate, and to a lesser extent acrylate, acetate and butyrate. This is 3-hydroxypropionyl-coenzyme A synthetase from Metallosphaera sedula (strain ATCC 51363 / DSM 5348 / JCM 9185 / NBRC 15509 / TH2).